Consider the following 196-residue polypeptide: Anthranilate synthase component 2 (196 aa).

In terms of domain architecture, Glutamine amidotransferase type-1 spans 3–196; that stretch reads VILIIDNYDS…RTVIRNFLRM (194 aa). L-glutamine is bound at residue 60–62; it reads GPG. Cysteine 89 (nucleophile; for GATase activity) is an active-site residue. Residues glutamine 93 and 138–139 contribute to the L-glutamine site; that span reads SL. Residues histidine 177 and glutamate 179 each act as for GATase activity in the active site.

As to quaternary structure, heterotetramer consisting of two non-identical subunits: a beta subunit (TrpG) and a large alpha subunit (TrpE).

It carries out the reaction chorismate + L-glutamine = anthranilate + pyruvate + L-glutamate + H(+). Its pathway is amino-acid biosynthesis; L-tryptophan biosynthesis; L-tryptophan from chorismate: step 1/5. Part of a heterotetrameric complex that catalyzes the two-step biosynthesis of anthranilate, an intermediate in the biosynthesis of L-tryptophan. In the first step, the glutamine-binding beta subunit (TrpG) of anthranilate synthase (AS) provides the glutamine amidotransferase activity which generates ammonia as a substrate that, along with chorismate, is used in the second step, catalyzed by the large alpha subunit of AS (TrpE) to produce anthranilate. In the absence of TrpG, TrpE can synthesize anthranilate directly from chorismate and high concentrations of ammonia. This chain is Anthranilate synthase component 2 (trpG), found in Methanothermobacter thermautotrophicus (strain ATCC 29096 / DSM 1053 / JCM 10044 / NBRC 100330 / Delta H) (Methanobacterium thermoautotrophicum).